The sequence spans 336 residues: F420-dependent glucose-6-phosphate dehydrogenase (336 aa).

Aspartate 39 lines the coenzyme F420-(gamma-Glu)n pocket. Histidine 40 serves as the catalytic Proton donor. Coenzyme F420-(gamma-Glu)n contacts are provided by residues threonine 76 and 107 to 108 (TG). Glutamate 109 functions as the Proton acceptor in the catalytic mechanism. Coenzyme F420-(gamma-Glu)n-binding positions include asparagine 112, 177-178 (GG), and 180-181 (EV). Substrate contacts are provided by threonine 195, lysine 198, lysine 259, and arginine 283.

Belongs to the F420-dependent glucose-6-phosphate dehydrogenase family. As to quaternary structure, homodimer.

It catalyses the reaction oxidized coenzyme F420-(gamma-L-Glu)(n) + D-glucose 6-phosphate + H(+) = 6-phospho-D-glucono-1,5-lactone + reduced coenzyme F420-(gamma-L-Glu)(n). In terms of biological role, catalyzes the coenzyme F420-dependent oxidation of glucose 6-phosphate (G6P) to 6-phosphogluconolactone. Appears to have a role in resistance to oxidative stress, via its consumption of G6P that serves as a source of reducing power to combat oxidative stress in mycobacteria. The protein is F420-dependent glucose-6-phosphate dehydrogenase of Mycobacterium leprae (strain Br4923).